The following is a 1375-amino-acid chain: DNA-directed RNA polymerase subunit beta' (1375 aa).

Residues C70, C72, C85, and C88 each coordinate Zn(2+). 3 residues coordinate Mg(2+): D461, D463, and D465. Zn(2+)-binding residues include C797, C871, C878, and C881.

It belongs to the RNA polymerase beta' chain family. The RNAP catalytic core consists of 2 alpha, 1 beta, 1 beta' and 1 omega subunit. When a sigma factor is associated with the core the holoenzyme is formed, which can initiate transcription. Mg(2+) is required as a cofactor. Requires Zn(2+) as cofactor.

It carries out the reaction RNA(n) + a ribonucleoside 5'-triphosphate = RNA(n+1) + diphosphate. In terms of biological role, DNA-dependent RNA polymerase catalyzes the transcription of DNA into RNA using the four ribonucleoside triphosphates as substrates. The chain is DNA-directed RNA polymerase subunit beta' from Neorickettsia sennetsu (strain ATCC VR-367 / Miyayama) (Ehrlichia sennetsu).